The following is a 168-amino-acid chain: Large ribosomal subunit protein uL10 (168 aa).

The protein belongs to the universal ribosomal protein uL10 family. In terms of assembly, part of the ribosomal stalk of the 50S ribosomal subunit. The N-terminus interacts with L11 and the large rRNA to form the base of the stalk. The C-terminus forms an elongated spine to which L12 dimers bind in a sequential fashion forming a multimeric L10(L12)X complex.

Functionally, forms part of the ribosomal stalk, playing a central role in the interaction of the ribosome with GTP-bound translation factors. This Buchnera aphidicola subsp. Baizongia pistaciae (strain Bp) protein is Large ribosomal subunit protein uL10 (rplJ).